Here is an 822-residue protein sequence, read N- to C-terminus: MKNKYDFKLVEEKRNEKWQKKGFFIAPKQTKKPFSIISPPPNVTGQLHLGHSWNAFIQDSLVRYHKLQGFDVLLLPSVDHAGIATQVKVEEDLAKKGIKKSDLKREEFIKKCYHWKEKQYLKIKEQWDKLGICYDFSKERFTLDQDAQIAVSDFFIKLWEKNLIYRGQKAINWDIKLQTAISNIEVINKPVEQKMYYLKYFLENSNEFLTVATTRIETISSDVALAINPKDKRYLHLVGKKVVHPLTKKLIIIIADSNVSSDFGSGIMKVSAHSILDFEIMEKHNLESKDCIDNYGNLNHEVPEFQGQNRFFARDLIAKKLEKEGFLAKIETVISNVGFSQRSDEIVEILKKPQWFVKMDELAKSLISHLNSKDKIKFYPKNFEKNLRKWFEKIHDWTISRQLWWGHRIPVWCKNDEFKVQIDSPGQGWIQDEDVLDTWFSSGISAFAFLGWPQNFDLIKSYFPTSLLVTGWDILFFWVARMYFSSLFIMKQKPFEKVLLHGLIRDEIGRKMSKSLGNGLDPMEIIEKYGSDTLRQALIFNSSPGKDIKFNIEKLNTAWNLNNKIWNIAKYIADLDTFFAKPDLIDLWMENKIYILKRQIVKNIKKYNFSVIGTEINNFIYGDFSSRYIELIKTRKNGFYARKLLRKVLIILHPFLPFLTDFLMEKIFKMEILEQKMPRIRQFKENQKVENILEIIDNLRTYREKFQISKKIILEYCIINDKFSNAEIDIINKLTFGKWLENKELVIKTKNFEIAIKVPEELKKEQKGRELKEIQFLKSEILRAEKILTNKGFLEKAPREKIDLERTKLEKLKEKLVFYEKK.

Residues 41 to 51 (PNVTGQLHLGH) carry the 'HIGH' region motif. Positions 511–515 (KMSKS) match the 'KMSKS' region motif. Lysine 514 provides a ligand contact to ATP. The stretch at 765–822 (EQKGRELKEIQFLKSEILRAEKILTNKGFLEKAPREKIDLERTKLEKLKEKLVFYEKK) forms a coiled coil.

This sequence belongs to the class-I aminoacyl-tRNA synthetase family. ValS type 1 subfamily. As to quaternary structure, monomer.

It localises to the cytoplasm. It catalyses the reaction tRNA(Val) + L-valine + ATP = L-valyl-tRNA(Val) + AMP + diphosphate. Functionally, catalyzes the attachment of valine to tRNA(Val). As ValRS can inadvertently accommodate and process structurally similar amino acids such as threonine, to avoid such errors, it has a 'posttransfer' editing activity that hydrolyzes mischarged Thr-tRNA(Val) in a tRNA-dependent manner. In Mesomycoplasma hyopneumoniae (strain J / ATCC 25934 / NCTC 10110) (Mycoplasma hyopneumoniae), this protein is Valine--tRNA ligase.